The chain runs to 919 residues: Alanine--tRNA ligase (919 aa).

Positions 565, 569, 667, and 671 each coordinate Zn(2+).

The protein belongs to the class-II aminoacyl-tRNA synthetase family. Zn(2+) serves as cofactor.

Its subcellular location is the cytoplasm. It carries out the reaction tRNA(Ala) + L-alanine + ATP = L-alanyl-tRNA(Ala) + AMP + diphosphate. Its function is as follows. Catalyzes the attachment of alanine to tRNA(Ala) in a two-step reaction: alanine is first activated by ATP to form Ala-AMP and then transferred to the acceptor end of tRNA(Ala). Also edits incorrectly charged Ser-tRNA(Ala) and Gly-tRNA(Ala) via its editing domain. The chain is Alanine--tRNA ligase from Leptospira biflexa serovar Patoc (strain Patoc 1 / Ames).